The chain runs to 198 residues: MQFEVKDLINKIKKDGLDEAERLSSEIILNAKQEAEAIILKAESEAKELKIKAEKEAYDYKRYSLEASRQAFRDLVIGTENSIKSLFKSALKDSVSSVYDSNFLRELIIRVLDVWGKDDKIDIMLNESDIDNLSSILKTSIRNKFGAEIEIKPFKGINKGFKVQQRDGSLYYDFTSEAIADILFEYLNPRFKEIIKLD.

This sequence belongs to the V-ATPase E subunit family.

Functionally, produces ATP from ADP in the presence of a proton gradient across the membrane. The protein is V-type proton ATPase subunit E of Borrelia duttonii (strain Ly).